A 443-amino-acid chain; its full sequence is UDP-glucuronic acid decarboxylase 4 (443 aa).

Residue Ala-2 is modified to N-acetylalanine. The Cytoplasmic portion of the chain corresponds to 2 to 43 (ASELTNRRHEIEQPEAESYYPKPIKPWFVAIRPIRYMLREQR). Residues 44–64 (LVFVLVGIAIATLGFTIFSKS) traverse the membrane as a helical; Signal-anchor for type II membrane protein segment. Over 65 to 443 (SNHQPIPYDV…DSSTTSSSTE (379 aa)) the chain is Lumenal. 151 to 176 (DNFFTGRKENVMHHFNNPNFEMIRHD) is an NAD(+) binding site. Arg-260 contacts substrate. The Proton acceptor role is filled by Tyr-263. 263–267 (YDEGK) serves as a coordination point for NAD(+). Asn-292 serves as a coordination point for substrate. An NAD(+)-binding site is contributed by Arg-304. Residues 305–309 (VVSNF), 322–329 (YGDGKQTR), and 389–393 (DPHKR) contribute to the substrate site.

Belongs to the NAD(P)-dependent epimerase/dehydratase family. UDP-glucuronic acid decarboxylase subfamily. The cofactor is NAD(+).

Its subcellular location is the golgi apparatus. It localises to the golgi stack membrane. It catalyses the reaction UDP-alpha-D-glucuronate + H(+) = UDP-alpha-D-xylose + CO2. The protein operates within nucleotide-sugar biosynthesis; UDP-alpha-D-xylose biosynthesis; UDP-alpha-D-xylose from UDP-alpha-D-glucuronate: step 1/1. Catalyzes the NAD-dependent decarboxylation of UDP-glucuronic acid to UDP-xylose. Necessary for the biosynthesis of the core tetrasaccharide in glycosaminoglycan biosynthesis. The sequence is that of UDP-glucuronic acid decarboxylase 4 (UXS4) from Arabidopsis thaliana (Mouse-ear cress).